Reading from the N-terminus, the 435-residue chain is Xylose isomerase (435 aa).

Residues H99 and D102 contribute to the active site. Mg(2+) contacts are provided by E230, E266, H269, D294, D305, D307, and D337.

Belongs to the xylose isomerase family. As to quaternary structure, homotetramer. The cofactor is Mg(2+).

It is found in the cytoplasm. The catalysed reaction is alpha-D-xylose = alpha-D-xylulofuranose. This chain is Xylose isomerase, found in Listeria welshimeri serovar 6b (strain ATCC 35897 / DSM 20650 / CCUG 15529 / CIP 8149 / NCTC 11857 / SLCC 5334 / V8).